The following is a 628-amino-acid chain: Phomenoic acid biosynthesis cluster MFS-type transporter (628 aa).

14 helical membrane-spanning segments follow: residues 102–122, 150–170, 174–194, 204–224, 232–252, 262–282, 302–322, 329–349, 375–395, 407–427, 435–455, 488–508, 524–544, and 595–615; these read IHGF…FLYA, VGFV…YGIL, WLYI…GAAP, VFAG…LSIN, AYLS…PVIG, WAFY…FFLL, FVGA…INFG, NSGT…AFAV, MLLF…IYFI, ALDS…TILV, FGYY…ANVF, GFEA…YAVI, IMIA…AVFI, and AKAF…SLGF.

The protein belongs to the major facilitator superfamily. TCR/Tet family.

The protein localises to the cell membrane. MFS-type transporter; part of the gene cluster that mediates the biosynthesis of phomenoic acid, a long chain aliphatic carboxylic acid that does not appear to be essential for pathogenicity but may play a role in allowing to outcompete other fungi in the environmental niche via its antifungal properties. Is probably involved in the efflux of phomenoic acid. The sequence is that of Phomenoic acid biosynthesis cluster MFS-type transporter from Leptosphaeria maculans (strain JN3 / isolate v23.1.3 / race Av1-4-5-6-7-8) (Blackleg fungus).